The chain runs to 510 residues: Histidine ammonia-lyase (510 aa).

Positions 144–146 (ASG) form a cross-link, 5-imidazolinone (Ala-Gly). The residue at position 145 (Ser-145) is a 2,3-didehydroalanine (Ser).

It belongs to the PAL/histidase family. Post-translationally, contains an active site 4-methylidene-imidazol-5-one (MIO), which is formed autocatalytically by cyclization and dehydration of residues Ala-Ser-Gly.

It is found in the cytoplasm. It carries out the reaction L-histidine = trans-urocanate + NH4(+). The protein operates within amino-acid degradation; L-histidine degradation into L-glutamate; N-formimidoyl-L-glutamate from L-histidine: step 1/3. In Chromobacterium violaceum (strain ATCC 12472 / DSM 30191 / JCM 1249 / CCUG 213 / NBRC 12614 / NCIMB 9131 / NCTC 9757 / MK), this protein is Histidine ammonia-lyase.